Here is a 445-residue protein sequence, read N- to C-terminus: Oxysterols receptor LXR-alpha (445 aa).

Disordered regions lie at residues 1–34 and 62–86; these read MSLWLEAAVPDVSPDSATELWKTEPQDAGDQGGN and TALLPRAETLPEPTELRPQKRKKGP. Positions 1–94 are transactivation AF-1; required for ligand-independent transactivation function; sequence MSLWLEAAVP…GPAPKMLGNE (94 aa). Residues 93–168 constitute a DNA-binding region (nuclear receptor); sequence NELCSVCGDK…AGMREECVLS (76 aa). 2 consecutive NR C4-type zinc fingers follow at residues 96–116 and 132–156; these read CSVCGDKASAFHYNVLSCEGC and CHSGGHCPMDTYMRRKCQECRLRKC. Positions 178–200 are disordered; the sequence is KRQEEEQAQATSVSPRVSSPPQV. Residues 189 to 200 show a composition bias toward low complexity; that stretch reads SVSPRVSSPPQV. Position 191 is a phosphoserine (Ser191). Residues 203-445 form a transactivation AF-2; required for ligand-dependent transactivation function; mediates interaction with CCAR2 region; it reads QLSPEQLGMI…LLSEIWDVHE (243 aa). The 239-residue stretch at 207–445 folds into the NR LBD domain; it reads EQLGMIEKLV…LLSEIWDVHE (239 aa).

The protein belongs to the nuclear hormone receptor family. NR1 subfamily. As to quaternary structure, heterodimer of NR1H3 and RXR (retinoic acid receptor). Interacts with CCAR2 (via N-terminus) in a ligand-independent manner. Interacts with SIRT1 and this interaction is inhibited by CCAR2. Post-translationally, ubiquitinated by UBR5, leading to its degradation: UBR5 specifically recognizes and binds ligand-bound NR1H3 when it is not associated with coactivators (NCOAs). In presence of NCOAs, the UBR5-degron is not accessible, preventing its ubiquitination and degradation. As to expression, in adults it is expressed in spleen, pituitary, lung, liver, and fat. Weaker expression is observed in several other tissues.

Its subcellular location is the nucleus. It is found in the cytoplasm. Its function is as follows. Nuclear receptor that exhibits a ligand-dependent transcriptional activation activity. Interaction with retinoic acid receptor (RXR) shifts RXR from its role as a silent DNA-binding partner to an active ligand-binding subunit in mediating retinoid responses through target genes defined by LXRES. LXRES are DR4-type response elements characterized by direct repeats of two similar hexanuclotide half-sites spaced by four nucleotides. Plays an important role in the regulation of cholesterol homeostasis, regulating cholesterol uptake through MYLIP-dependent ubiquitination of LDLR, VLDLR and LRP8. Interplays functionally with RORA for the regulation of genes involved in liver metabolism. Induces LPCAT3-dependent phospholipid remodeling in endoplasmic reticulum (ER) membranes of hepatocytes, driving SREBF1 processing and lipogenesis. Via LPCAT3, triggers the incorporation of arachidonate into phosphatidylcholines of ER membranes, increasing membrane dynamics and enabling triacylglycerols transfer to nascent very low-density lipoprotein (VLDL) particles. Via LPCAT3 also counteracts lipid-induced ER stress response and inflammation, likely by modulating SRC kinase membrane compartmentalization and limiting the synthesis of lipid inflammatory mediators. This is Oxysterols receptor LXR-alpha (Nr1h3) from Rattus norvegicus (Rat).